We begin with the raw amino-acid sequence, 159 residues long: Trafficking protein particle complex subunit 6A (159 aa).

A Phosphoserine modification is found at Ser-33.

The protein belongs to the TRAPP small subunits family. BET3 subfamily. Part of the multisubunit transport protein particle (TRAPP) complex. Heterodimer with TRAPPC3. The heterodimer TRAPPC3-TRAPPC6A interacts with TRAPPC2L. Interacts with TRAPPC2L. Ubiquitous, with lowest expression in skeletal muscle and brain and highest in kidney, liver and testis, as well as in cultured melanocytes.

The protein localises to the golgi apparatus. It localises to the cis-Golgi network. The protein resides in the endoplasmic reticulum. Its function is as follows. May play a role in vesicular transport during the biogenesis of melanosomes. The protein is Trafficking protein particle complex subunit 6A of Mus musculus (Mouse).